A 309-amino-acid chain; its full sequence is G-protein coupled receptor 35 (309 aa).

Over 1–24 the chain is Extracellular; it reads MNGTYNTCGSSDLTWPPAIKLGFY. N2 carries an N-linked (GlcNAc...) asparagine glycan. A helical membrane pass occupies residues 25–45; sequence AYLGVLLVLGLLLNSLALWVF. The Cytoplasmic segment spans residues 46-56; the sequence is CCRMQQWTETR. Residues 57–77 traverse the membrane as a helical segment; the sequence is IYMTNLAVADLCLLCTLPFVL. Residues 78 to 90 lie on the Extracellular side of the membrane; sequence HSLRDTSDTPLCQ. C89 and C162 are disulfide-bonded. Residues 91–112 traverse the membrane as a helical segment; that stretch reads LSQGIYLTNRYMSISLVTAIAV. The Cytoplasmic portion of the chain corresponds to 113 to 135; that stretch reads DRYVAVRHPLRARGLRSPRQAAA. A helical transmembrane segment spans residues 136 to 156; sequence VCAVLWVLVIGSLVARWLLGI. The Extracellular portion of the chain corresponds to 157–174; it reads QEGGFCFRSTRHNFNSMA. The chain crosses the membrane as a helical span at residues 175–195; the sequence is FPLLGFYLPLAVVVFCSLKVV. Residues 196–218 lie on the Cytoplasmic side of the membrane; the sequence is TALAQRPPTDVGQAEATRKAARM. The chain crosses the membrane as a helical span at residues 219–239; the sequence is VWANLLVFVVCFLPLHVGLTV. The Extracellular portion of the chain corresponds to 240 to 258; sequence RLAVGWNACALLETIRRAL. A helical membrane pass occupies residues 259–279; sequence YITSKLSDANCCLDAICYYYM. Residues 280–309 lie on the Cytoplasmic side of the membrane; that stretch reads AKEFQEASALAVAPSAKAHKSQDSLCVTLA. Phosphoserine is present on residues S287 and S294. S300 and S303 each carry phosphoserine; by GRK5 and GRK6. Phosphothreonine is present on T307.

The protein belongs to the G-protein coupled receptor 1 family. In terms of assembly, interacts with GNA13. Interacts with ARRB2. Post-translationally, multiply phosphorylated in clusters of serines and threonines in the C-terminal tail. Phosphorylation of Ser-300 and Ser-303 is mediated by GRK5 and/or GRK6. As to expression, predominantly expressed in immune and gastrointestinal tissues.

It localises to the cell membrane. Functionally, G-protein coupled receptor that binds to several ligands including the tryptophan metabolite kynurenic acid (KYNA), lysophosphatidic acid (LPA) or 5-hydroxyindoleacetic acid (5-HIAA) with high affinity, leading to rapid and transient activation of numerous intracellular signaling pathways. Plays a role in neutrophil recruitment to sites of inflammation and bacterial clearance through the major serotonin metabolite 5-HIAA that acts as a physiological ligand. Stimulates lipid metabolism, thermogenic, and anti-inflammatory gene expression in adipose tissue once activated by kynurenic acid. In macrophages, activation by lysophosphatidic acid promotes GPR35-induced signaling with a distinct transcriptional profile characterized by TNF production associated with ERK and NF-kappa-B activation. In turn, induces chemotaxis of macrophages. The sequence is that of G-protein coupled receptor 35 (GPR35) from Homo sapiens (Human).